The chain runs to 315 residues: 2-oxoglutarate and iron-dependent oxygenase domain-containing protein 3 (315 aa).

The segment at Met-1–Leu-31 is disordered. The Cytoplasmic portion of the chain corresponds to Met-1–Arg-41. Over residues Ala-18–Leu-31 the composition is skewed to basic and acidic residues. Residues Ile-42–Ile-62 form a helical; Signal-anchor for type II membrane protein membrane-spanning segment. At Asp-63 to Thr-315 the chain is on the lumenal side. A Fe2OG dioxygenase domain is found at Lys-203–Pro-305. A glycan (N-linked (GlcNAc...) asparagine) is linked at Asn-211. 2 residues coordinate Fe cation: His-226 and Asp-228. Asn-263 carries N-linked (GlcNAc...) asparagine glycosylation. His-284 is a Fe cation binding site. Arg-294 is a catalytic residue. Position 294 (Arg-294) interacts with 2-oxoglutarate.

This sequence belongs to the OGFOD3 family. The cofactor is Fe(2+). Requires L-ascorbate as cofactor.

It localises to the membrane. The polypeptide is 2-oxoglutarate and iron-dependent oxygenase domain-containing protein 3 (Ogfod3) (Mus musculus (Mouse)).